Consider the following 318-residue polypeptide: Large ribosomal subunit protein uL10 (318 aa).

Tyr-24 is subject to Phosphotyrosine. The residue at position 59 (Thr-59) is a Phosphothreonine. Lys-264 participates in a covalent cross-link: Glycyl lysine isopeptide (Lys-Gly) (interchain with G-Cter in ubiquitin). The segment at 293–318 (TAAPAKVEAKEESEESDEDMGFGLFD) is disordered. A Glycyl lysine isopeptide (Lys-Gly) (interchain with G-Cter in SUMO1); alternate cross-link involves residue Lys-298. Lys-298 is covalently cross-linked (Glycyl lysine isopeptide (Lys-Gly) (interchain with G-Cter in SUMO2); alternate). The span at 303 to 312 (EESEESDEDM) shows a compositional bias: acidic residues. A phosphoserine mark is found at Ser-305 and Ser-308.

The protein belongs to the universal ribosomal protein uL10 family. P0 forms a pentameric complex by interaction with dimers of P1 and P2. Identified in a IGF2BP1-dependent mRNP granule complex containing untranslated mRNAs. Interacts with APEX1. Interacts with FMR1. In terms of processing, ubiquitinated at Lys-264 by RNF14 and RNF25 in response to ribosome collisions (ribosome stalling).

The protein localises to the nucleus. It is found in the cytoplasm. Ribosomal protein P0 is the functional equivalent of E.coli protein L10. The protein is Large ribosomal subunit protein uL10 (RPLP0) of Bos taurus (Bovine).